Here is a 396-residue protein sequence, read N- to C-terminus: Obg-like ATPase 1 (396 aa).

The OBG-type G domain occupies 23–283; the sequence is LKIGIVGLPN…LSAEERQKYL (261 aa). 32-37 lines the ATP pocket; sequence NVGKST. Mg(2+)-binding residues include S36 and T56. ATP is bound at residue L231. A Nuclear export signal motif is present at residues 267–274; sequence LELKLQEL. An N6-acetyllysine modification is found at K294. One can recognise a TGS domain in the interval 304–387; the sequence is QLEYFFTAGP…EDGDIIFFKF (84 aa).

Belongs to the TRAFAC class OBG-HflX-like GTPase superfamily. OBG GTPase family. YchF/OLA1 subfamily. Monomer. Mg(2+) serves as cofactor.

The protein resides in the cytoplasm. It localises to the nucleus. It is found in the nucleolus. Hydrolyzes ATP, and can also hydrolyze GTP with lower efficiency. Has lower affinity for GTP. The polypeptide is Obg-like ATPase 1 (Pongo abelii (Sumatran orangutan)).